Here is a 324-residue protein sequence, read N- to C-terminus: Putative F-box/kelch-repeat protein At5g28160 (324 aa).

Residues 7 to 54 (RPSFLSLPDEIILSCLARISRSYYPKLSLVCKTFRTLLISNELIVARL) enclose the F-box domain. One copy of the Kelch repeat lies at 170–216 (KIYVMGGCMADESVNWGEVFDIKTQTWEALPDPGPEFRFSSIRKIDV).

This is Putative F-box/kelch-repeat protein At5g28160 from Arabidopsis thaliana (Mouse-ear cress).